The primary structure comprises 459 residues: ATP synthase subunit beta (459 aa).

Residue 148 to 155 (GGAGVGKT) participates in ATP binding.

Belongs to the ATPase alpha/beta chains family. As to quaternary structure, F-type ATPases have 2 components, CF(1) - the catalytic core - and CF(0) - the membrane proton channel. CF(1) has five subunits: alpha(3), beta(3), gamma(1), delta(1), epsilon(1). CF(0) has three main subunits: a(1), b(2) and c(9-12). The alpha and beta chains form an alternating ring which encloses part of the gamma chain. CF(1) is attached to CF(0) by a central stalk formed by the gamma and epsilon chains, while a peripheral stalk is formed by the delta and b chains.

Its subcellular location is the cell inner membrane. The enzyme catalyses ATP + H2O + 4 H(+)(in) = ADP + phosphate + 5 H(+)(out). Produces ATP from ADP in the presence of a proton gradient across the membrane. The catalytic sites are hosted primarily by the beta subunits. The polypeptide is ATP synthase subunit beta (Vesicomyosocius okutanii subsp. Calyptogena okutanii (strain HA)).